Here is a 69-residue protein sequence, read N- to C-terminus: Large ribosomal subunit protein uL29 (69 aa).

It belongs to the universal ribosomal protein uL29 family.

In Rhodopseudomonas palustris (strain TIE-1), this protein is Large ribosomal subunit protein uL29.